We begin with the raw amino-acid sequence, 445 residues long: MSHQHTTQTSGQGMLERVFKLREHGTTARTEVIAGFTTFLTMVYIVFVNPQILGVAGMDTSAVFVTTCLIAAFGSIMMGLFANLPVALAPAMGLNAFFAFVVVQAMGLPWQVGMGAIFWGAIGLLLLTIFRVRYWMIANIPVSLRVGITSGIGLFIGMMGLKNAGVIVANPETLVSIGNLTSHSVLLGILGFFIIAILASRNIHAAVLVSIVVTTLLGWMLGDVHYNGIVSAPPSVMTVVGHVDLAGSFNLGLAGVIFSFMLVNLFDSSGTLIGVTDKAGLADEKGKFPRMKQALYVDSISSVTGSFIGTSSVTAYIESSSGVSVGGRTGLTAVVVGLLFLLVIFLSPLAGMVPGYAAAGALIYVGVLMTSSLARVNWQDLTESVPAFITAVMMPFSFSITEGIALGFISYCVMKIGTGRLRDLSPCVIIVALLFILKIVFIDAH.

Topologically, residues 1 to 28 (MSHQHTTQTSGQGMLERVFKLREHGTTA) are cytoplasmic. Residues 29–52 (RTEVIAGFTTFLTMVYIVFVNPQI) form a helical membrane-spanning segment. Residues 53–62 (LGVAGMDTSA) are Periplasmic-facing. The helical transmembrane segment at 63–81 (VFVTTCLIAAFGSIMMGLF) threads the bilayer. The Cytoplasmic portion of the chain corresponds to 82–83 (AN). A discontinuously helical membrane pass occupies residues 84–100 (LPVALAPAMGLNAFFAF). The Periplasmic portion of the chain corresponds to 101–112 (VVVQAMGLPWQV). Residues 113 to 132 (GMGAIFWGAIGLLLLTIFRV) form a helical membrane-spanning segment. The Cytoplasmic portion of the chain corresponds to 133–144 (RYWMIANIPVSL). A helical membrane pass occupies residues 145 to 165 (RVGITSGIGLFIGMMGLKNAG). Topologically, residues 166-181 (VIVANPETLVSIGNLT) are periplasmic. Residues 182 to 199 (SHSVLLGILGFFIIAILA) traverse the membrane as a helical segment. Over 200–203 (SRNI) the chain is Cytoplasmic. Residues 204 to 222 (HAAVLVSIVVTTLLGWMLG) form a helical membrane-spanning segment. The Periplasmic portion of the chain corresponds to 223 to 250 (DVHYNGIVSAPPSVMTVVGHVDLAGSFN). A helical transmembrane segment spans residues 251 to 279 (LGLAGVIFSFMLVNLFDSSGTLIGVTDKA). Residues 280–292 (GLADEKGKFPRMK) lie on the Cytoplasmic side of the membrane. Residues 293-308 (QALYVDSISSVTGSFI) traverse the membrane as a helical segment. The Periplasmic segment spans residues 309–310 (GT). Residues 311-326 (SSVTAYIESSSGVSVG) form a discontinuously helical membrane-spanning segment. The Cytoplasmic portion of the chain corresponds to 327 to 330 (GRTG). The chain crosses the membrane as a helical span at residues 331–345 (LTAVVVGLLFLLVIF). Over 346-356 (LSPLAGMVPGY) the chain is Periplasmic. A helical membrane pass occupies residues 357–376 (AAAGALIYVGVLMTSSLARV). Residues 377–381 (NWQDL) lie on the Cytoplasmic side of the membrane. Residues 382-417 (TESVPAFITAVMMPFSFSITEGIALGFISYCVMKIG) constitute an intramembrane region (discontinuously helical). The Cytoplasmic portion of the chain corresponds to 418 to 445 (TGRLRDLSPCVIIVALLFILKIVFIDAH).

The protein belongs to the nucleobase:cation symporter-2 (NCS2) (TC 2.A.40) family. Azg-like subfamily.

It is found in the cell inner membrane. With respect to regulation, internal adenine may inhibit transport. In terms of biological role, high-affinity transporter for adenine. This is Adenine permease AdeP (adeP) from Escherichia coli (strain K12).